Consider the following 78-residue polypeptide: UPF0291 protein LBUL_1264 (78 aa).

This sequence belongs to the UPF0291 family.

Its subcellular location is the cytoplasm. The protein is UPF0291 protein LBUL_1264 of Lactobacillus delbrueckii subsp. bulgaricus (strain ATCC BAA-365 / Lb-18).